Consider the following 616-residue polypeptide: Protein cereblon (616 aa).

Disordered stretches follow at residues 1–39 (MDEE…DDSV), 63–137 (FGPS…AMPR), and 182–220 (SQER…DIDM). Residues 11 to 32 (AQEQEVAGSAGEAAAGPSGAEV) are compositionally biased toward low complexity. Acidic residues predominate over residues 96-107 (SEEDIVLDDGTE). The segment covering 183–192 (QERRRSRNSD) has biased composition (basic and acidic residues). Positions 194 to 203 (VSPEAEDDEL) are enriched in acidic residues. Over residues 206–215 (HPPPPPPRPP) the composition is skewed to pro residues. The region spanning 257–482 (HMLIFLHQYI…LIGGILKEET (226 aa)) is the Lon N-terminal domain. A CULT domain is found at 481-590 (ETLFYCRYCN…LAGSSVRIGK (110 aa)). Residues cysteine 486, cysteine 489, cysteine 555, and cysteine 558 each coordinate Zn(2+).

Belongs to the CRBN family. As to quaternary structure, likely a component of a DCX (DDB1-CUL4-X-box) protein ligase complex. May interact with pic/DDB1. Ubiquitinated.

It localises to the nucleus. It functions in the pathway protein modification; protein ubiquitination. Its function is as follows. Substrate recognition component of a DCX (DDB1-CUL4-X-box) E3 protein ligase complex that mediates the ubiquitination and subsequent proteasomal degradation of target proteins. Has an essential role in mediating growth by negatively regulating insulin signaling. It also has a role in maintaining presynaptic function in the neuromuscular junction synapses of third-instar larvae. This is Protein cereblon from Drosophila pseudoobscura pseudoobscura (Fruit fly).